The chain runs to 1887 residues: Bifunctional serine/threonine-protein kinase/NEDD4-like E3 ubiquitin-protein ligase (1887 aa).

Disordered stretches follow at residues 19 to 55 (TPQV…TTNF) and 72 to 98 (TDNY…TKEN). Low complexity-rich tracts occupy residues 26–54 (NNSN…STTN) and 72–97 (TDNY…NTKE). 6 RCC1 repeats span residues 206 to 260 (QGNL…ALTI), 262 to 314 (GKVY…NNNN), 356 to 409 (KGLL…VLTN), 411 to 470 (GLVF…AISD), 472 to 528 (NDTY…AMSI), and 529 to 581 (DGSL…IVEK). Residues 299–333 (NNNNNNNNNNSTNNNNNNNNDGAQQQFSLSQNSSS) form a disordered region. Disordered regions lie at residues 594 to 619 (LPSS…SDSN), 823 to 858 (VLVH…KNGT), and 1030 to 1088 (DDDN…NNNN). Basic and acidic residues predominate over residues 825–839 (VHQDEKQQQREKSET). The span at 840-852 (ELEEEQDEEEEDS) shows a compositional bias: acidic residues. Residues 1036 to 1088 (ENNSVNNNSNNNNNNNNNNNNNNNNNNNNNNNIDNNINSNSINDSSNNNNNNN) show a composition bias toward low complexity. Positions 1158–1437 (YDIIKTLSTH…AHQIAVHPYF (280 aa)) constitute a Protein kinase domain. Residues 1164–1172 (LSTHPHNVY) and K1184 each bind ATP. Catalysis depends on D1281, which acts as the Proton acceptor. The HECT domain maps to 1501-1887 (ESNKLFCRLE…LEYVDGFAFI (387 aa)). The tract at residues 1586–1628 (NNNNNNEENNNNNNNNNNNNNNNNNNNNNNNNNNNNNNNNNEE) is disordered. The active-site Glycyl thioester intermediate is C1855.

In the N-terminal section; belongs to the protein kinase superfamily. Ser/Thr protein kinase family. It in the C-terminal section; belongs to the protein kinase superfamily. CAMK Ser/Thr protein kinase family.

The enzyme catalyses L-seryl-[protein] + ATP = O-phospho-L-seryl-[protein] + ADP + H(+). It carries out the reaction L-threonyl-[protein] + ATP = O-phospho-L-threonyl-[protein] + ADP + H(+). It catalyses the reaction S-ubiquitinyl-[E2 ubiquitin-conjugating enzyme]-L-cysteine + [acceptor protein]-L-lysine = [E2 ubiquitin-conjugating enzyme]-L-cysteine + N(6)-ubiquitinyl-[acceptor protein]-L-lysine.. The protein operates within protein modification; protein ubiquitination. The polypeptide is Bifunctional serine/threonine-protein kinase/NEDD4-like E3 ubiquitin-protein ligase (Dictyostelium discoideum (Social amoeba)).